Reading from the N-terminus, the 353-residue chain is Glycerol-3-phosphate dehydrogenase [NAD(P)+] (353 aa).

3 residues coordinate NADPH: W11, R40, and K115. Residues K115, G156, and S158 each coordinate sn-glycerol 3-phosphate. NADPH is bound at residue A160. 5 residues coordinate sn-glycerol 3-phosphate: K211, D264, S274, R275, and N276. Catalysis depends on K211, which acts as the Proton acceptor. R275 is an NADPH binding site. Residues V299 and E301 each coordinate NADPH.

The protein belongs to the NAD-dependent glycerol-3-phosphate dehydrogenase family.

It is found in the cytoplasm. The enzyme catalyses sn-glycerol 3-phosphate + NAD(+) = dihydroxyacetone phosphate + NADH + H(+). It catalyses the reaction sn-glycerol 3-phosphate + NADP(+) = dihydroxyacetone phosphate + NADPH + H(+). It functions in the pathway membrane lipid metabolism; glycerophospholipid metabolism. In terms of biological role, catalyzes the reduction of the glycolytic intermediate dihydroxyacetone phosphate (DHAP) to sn-glycerol 3-phosphate (G3P), the key precursor for phospholipid synthesis. This is Glycerol-3-phosphate dehydrogenase [NAD(P)+] from Polaromonas sp. (strain JS666 / ATCC BAA-500).